The primary structure comprises 303 residues: Mycothiol acetyltransferase (303 aa).

N-acetyltransferase domains follow at residues 10 to 156 and 162 to 303; these read ALPG…LAVP and LAVR…SGPR. Glutamate 41 is a binding site for 1D-myo-inositol 2-(L-cysteinylamino)-2-deoxy-alpha-D-glucopyranoside. 86-88 is a binding site for acetyl-CoA; the sequence is LLV. 1D-myo-inositol 2-(L-cysteinylamino)-2-deoxy-alpha-D-glucopyranoside is bound by residues glutamate 189, lysine 228, and glutamate 235. Acetyl-CoA contacts are provided by residues 239 to 241 and 246 to 252; these read LGV and SGAGLGR. Tyrosine 272 lines the 1D-myo-inositol 2-(L-cysteinylamino)-2-deoxy-alpha-D-glucopyranoside pocket. 277–282 is a binding site for acetyl-CoA; that stretch reads NLRAVR.

The protein belongs to the acetyltransferase family. MshD subfamily. In terms of assembly, monomer.

The catalysed reaction is 1D-myo-inositol 2-(L-cysteinylamino)-2-deoxy-alpha-D-glucopyranoside + acetyl-CoA = mycothiol + CoA + H(+). Functionally, catalyzes the transfer of acetyl from acetyl-CoA to desacetylmycothiol (Cys-GlcN-Ins) to form mycothiol. The polypeptide is Mycothiol acetyltransferase (Kineococcus radiotolerans (strain ATCC BAA-149 / DSM 14245 / SRS30216)).